A 299-amino-acid chain; its full sequence is Taste receptor type 2 member 42 (299 aa).

Topologically, residues 1 to 7 are extracellular; sequence MATELDK. Residues 8–28 form a helical membrane-spanning segment; it reads IFLILAIAEFIISMLGNVFIG. Residues 29-50 are Cytoplasmic-facing; the sequence is LVNCSEGIKNQKVFSSDFILTS. Residues 51-71 traverse the membrane as a helical segment; it reads LAISTIGQLLVILFDSFLVGL. At 72–101 the chain is on the extracellular side; the sequence is ASHLYTTYRLGKPVIMLWHMTNHLTTWLAT. Residues 102 to 122 traverse the membrane as a helical segment; that stretch reads CLSVFYFFKIAHFPHSLFLWL. The Cytoplasmic portion of the chain corresponds to 123–127; that stretch reads RWRMN. A helical transmembrane segment spans residues 128 to 148; that stretch reads GMIAMLLILSLFLLIFDSSVL. The Extracellular segment spans residues 149-187; sequence EIFIDISLNIIDKSSLTLYLDESKTLYDKLSILKTLLSL. A helical membrane pass occupies residues 188–208; it reads TSFIPFSLSLTSVLFLYLSLV. The Cytoplasmic segment spans residues 209-238; that stretch reads RHTRNLKLSSLGSRDSSTEAHRRAMKMVMS. The helical transmembrane segment at 239-259 threads the bilayer; that stretch reads FLFLFIVHFFSLQVANWIFFM. The Extracellular segment spans residues 260-265; that stretch reads LWNNKY. Residues 266 to 286 form a helical membrane-spanning segment; that stretch reads IKFVMLALNAFPSCHSFILIL. Over 287–299 the chain is Cytoplasmic; it reads GNSKLRQTAVRLL.

This sequence belongs to the G-protein coupled receptor T2R family.

The protein resides in the membrane. Receptor that may play a role in the perception of bitterness and is gustducin-linked. May play a role in sensing the chemical composition of the gastrointestinal content. The activity of this receptor may stimulate alpha gustducin, mediate PLC-beta-2 activation and lead to the gating of TRPM5. The protein is Taste receptor type 2 member 42 (TAS2R42) of Gorilla gorilla gorilla (Western lowland gorilla).